We begin with the raw amino-acid sequence, 371 residues long: Heterodimeric geranylgeranyl pyrophosphate synthase large subunit 1, chloroplastic (371 aa).

Residues 1–51 constitute a chloroplast transit peptide; it reads MASVTLGSWIVVHHHNHHHPSSILTKSRSRSCPITLTKPISFRSKRTVSSS. An N-acetylserine modification is found at Ser52. Isopentenyl diphosphate contacts are provided by Lys116, Arg119, and His148. Mg(2+) is bound by residues Asp155 and Asp161. Position 166 (Arg166) interacts with dimethylallyl diphosphate. Arg167 contacts isopentenyl diphosphate. Lys256, Thr257, Gln294, Lys311, and Lys321 together coordinate dimethylallyl diphosphate.

Belongs to the FPP/GGPP synthase family. Forms homodimers. Part of a heterodimeric geranyl(geranyl)diphosphate synthase. Interacts with GGR. The cofactor is Mg(2+). In terms of tissue distribution, expressed ubiquitously.

The protein resides in the plastid. Its subcellular location is the chloroplast. It localises to the cytoplasm. It catalyses the reaction isopentenyl diphosphate + dimethylallyl diphosphate = (2E)-geranyl diphosphate + diphosphate. The catalysed reaction is isopentenyl diphosphate + (2E)-geranyl diphosphate = (2E,6E)-farnesyl diphosphate + diphosphate. It carries out the reaction isopentenyl diphosphate + (2E,6E)-farnesyl diphosphate = (2E,6E,10E)-geranylgeranyl diphosphate + diphosphate. The protein operates within isoprenoid biosynthesis; farnesyl diphosphate biosynthesis; farnesyl diphosphate from geranyl diphosphate and isopentenyl diphosphate: step 1/1. It functions in the pathway isoprenoid biosynthesis; geranyl diphosphate biosynthesis; geranyl diphosphate from dimethylallyl diphosphate and isopentenyl diphosphate: step 1/1. It participates in isoprenoid biosynthesis; geranylgeranyl diphosphate biosynthesis; geranylgeranyl diphosphate from farnesyl diphosphate and isopentenyl diphosphate: step 1/1. Functionally, heterodimeric geranyl(geranyl)-diphosphate (GPP) synthase large subunit. In vitro, the large subunit catalyzes mainly the trans-addition of the three molecules of IPP onto DMAPP to form geranylgeranyl pyrophosphate while the small subunit alone is inactive. Upon association of the two subunits, the product profile changes and the production of gerany-diphosphate is strongly increased. The protein is Heterodimeric geranylgeranyl pyrophosphate synthase large subunit 1, chloroplastic (GGPPS1) of Arabidopsis thaliana (Mouse-ear cress).